We begin with the raw amino-acid sequence, 891 residues long: Aconitate hydratase A (891 aa).

The [4Fe-4S] cluster site is built by Cys435, Cys501, and Cys504.

Belongs to the aconitase/IPM isomerase family. As to quaternary structure, monomer. [4Fe-4S] cluster serves as cofactor.

The enzyme catalyses citrate = D-threo-isocitrate. It catalyses the reaction (2S,3R)-3-hydroxybutane-1,2,3-tricarboxylate = 2-methyl-cis-aconitate + H2O. It functions in the pathway carbohydrate metabolism; tricarboxylic acid cycle; isocitrate from oxaloacetate: step 2/2. Its pathway is organic acid metabolism; propanoate degradation. Functionally, involved in the catabolism of short chain fatty acids (SCFA) via the tricarboxylic acid (TCA)(acetyl degradation route) and the 2-methylcitrate cycle I (propionate degradation route). Catalyzes the reversible isomerization of citrate to isocitrate via cis-aconitate. Also catalyzes the hydration of 2-methyl-cis-aconitate to yield (2R,3S)-2-methylisocitrate. The (2S,3S)-2-methylcitrate (2-MC) is a very poor substrate. The apo form of AcnA functions as a RNA-binding regulatory protein. This chain is Aconitate hydratase A (acnA), found in Salmonella typhimurium (strain LT2 / SGSC1412 / ATCC 700720).